The primary structure comprises 93 residues: MFLQTLRLTMPRMFLHMKPSPITITRACTVPSLLSVAAPQPALVAANRPLVFNRGFKVRTSVKKFCSDCYLVRRKGRVYIYCKSNKKHKQRQG.

The N-terminal 35 residues, 1 to 35 (MFLQTLRLTMPRMFLHMKPSPITITRACTVPSLLS), are a transit peptide targeting the mitochondrion.

This sequence belongs to the bacterial ribosomal protein bL36 family. Component of the mitochondrial large ribosomal subunit (mt-LSU). Mature yeast 74S mitochondrial ribosomes consist of a small (37S) and a large (54S) subunit. The 37S small subunit contains a 15S ribosomal RNA (15S mt-rRNA) and 34 different proteins. The 54S large subunit contains a 21S rRNA (21S mt-rRNA) and 46 different proteins. bL36m has a zinc binding site.

The protein localises to the mitochondrion. In terms of biological role, component of the mitochondrial ribosome (mitoribosome), a dedicated translation machinery responsible for the synthesis of mitochondrial genome-encoded proteins, including at least some of the essential transmembrane subunits of the mitochondrial respiratory chain. The mitoribosomes are attached to the mitochondrial inner membrane and translation products are cotranslationally integrated into the membrane. bL36m may be involved in a process influencing telomere capping. The polypeptide is Large ribosomal subunit protein bL36m (RTC6) (Saccharomyces cerevisiae (strain ATCC 204508 / S288c) (Baker's yeast)).